A 306-amino-acid chain; its full sequence is Anamorsin (306 aa).

An N-terminal SAM-like domain region spans residues 6 to 172 (IAPGQRVAVI…KPNFEVGSSS (167 aa)). The linker stretch occupies residues 173–224 (QLKLSFAKKTSPSGKPSVDPATAKLWTLSASDMNDEEMDLLDSDELLDSEDL). [2Fe-2S] cluster contacts are provided by cysteine 237, cysteine 246, cysteine 249, and cysteine 251. Residues 237-251 (CKEKGKKKACKNCTC) form a fe-S binding site A region. 4 residues coordinate [4Fe-4S] cluster: cysteine 270, cysteine 273, cysteine 281, and cysteine 284. 2 consecutive short sequence motifs (cx2C motif) follow at residues 270–273 (CGNC) and 281–284 (CASC). The fe-S binding site B stretch occupies residues 270 to 284 (CGNCYLGDAFRCASC).

Belongs to the anamorsin family. Monomer. Interacts with NDOR1. Interacts with CHCHD4. [2Fe-2S] cluster serves as cofactor. Requires [4Fe-4S] cluster as cofactor.

Its subcellular location is the cytoplasm. The protein resides in the nucleus. It localises to the mitochondrion intermembrane space. Functionally, component of the cytosolic iron-sulfur (Fe-S) protein assembly (CIA) machinery required for the maturation of extramitochondrial Fe-S proteins. Part of an electron transfer chain functioning in an early step of cytosolic Fe-S biogenesis, facilitating the de novo assembly of a [4Fe-4S] cluster on the scaffold complex NUBP1-NUBP2. Electrons are transferred to CIAPIN1 from NADPH via the FAD- and FMN-containing protein NDOR1. NDOR1-CIAPIN1 are also required for the assembly of the diferric tyrosyl radical cofactor of ribonucleotide reductase (RNR), probably by providing electrons for reduction during radical cofactor maturation in the catalytic small subunit. Has anti-apoptotic effects in the cell. Involved in negative control of cell death upon cytokine withdrawal. Promotes development of hematopoietic cells. The polypeptide is Anamorsin (Gallus gallus (Chicken)).